A 415-amino-acid polypeptide reads, in one-letter code: Putative ankyrin repeat protein FPV034 (415 aa).

ANK repeat units follow at residues 12–41 (ICIK…NINT), 43–72 (KHFN…NINI), 76–105 (VGYT…IINK), 107–135 (DYRL…NINV), 139–168 (KGYT…DISI), 170–200 (NKYS…DVNI), 203–232 (HVKA…DVNI), 237–266 (GGRT…NVDS), 270–299 (VGNT…DINV), and 303–332 (FGET…SLKV).

This Fowlpox virus (strain NVSL) (FPV) protein is Putative ankyrin repeat protein FPV034 (ANK2).